A 284-amino-acid polypeptide reads, in one-letter code: Pantothenate synthetase (284 aa).

An ATP-binding site is contributed by 30–37 (MGNLHEGH). The active-site Proton donor is the His37. Residue Gln61 participates in (R)-pantoate binding. A beta-alanine-binding site is contributed by Gln61. 149–152 (GEKD) lines the ATP pocket. Gln155 provides a ligand contact to (R)-pantoate. Residues Val178 and 186–189 (LSSR) contribute to the ATP site.

The protein belongs to the pantothenate synthetase family. As to quaternary structure, homodimer.

It localises to the cytoplasm. The catalysed reaction is (R)-pantoate + beta-alanine + ATP = (R)-pantothenate + AMP + diphosphate + H(+). It participates in cofactor biosynthesis; (R)-pantothenate biosynthesis; (R)-pantothenate from (R)-pantoate and beta-alanine: step 1/1. In terms of biological role, catalyzes the condensation of pantoate with beta-alanine in an ATP-dependent reaction via a pantoyl-adenylate intermediate. The sequence is that of Pantothenate synthetase from Yersinia pestis bv. Antiqua (strain Antiqua).